Here is a 152-residue protein sequence, read N- to C-terminus: Probable histone H2A.3 (152 aa).

Disordered regions lie at residues 1–25 and 129–152; these read MDAS…KKSV and KTER…PKKA. Residues 7 to 25 are compositionally biased toward basic residues; it reads TTKKGAGGRKGGGPRKKSV. The span at 129 to 142 shows a compositional bias: basic and acidic residues; it reads KTERANTGGKEPKT. The SPKK motif signature appears at 148–151; the sequence is SPKK.

It belongs to the histone H2A family. In terms of assembly, the nucleosome is a histone octamer containing two molecules each of H2A, H2B, H3 and H4 assembled in one H3-H4 heterotetramer and two H2A-H2B heterodimers. The octamer wraps approximately 147 bp of DNA.

The protein resides in the nucleus. The protein localises to the chromosome. Functionally, core component of nucleosome. Nucleosomes wrap and compact DNA into chromatin, limiting DNA accessibility to the cellular machineries which require DNA as a template. Histones thereby play a central role in transcription regulation, DNA repair, DNA replication and chromosomal stability. DNA accessibility is regulated via a complex set of post-translational modifications of histones, also called histone code, and nucleosome remodeling. This chain is Probable histone H2A.3, found in Medicago truncatula (Barrel medic).